The following is a 390-amino-acid chain: Protein snail (390 aa).

Positions 1–20 are SNAG domain; that stretch reads MAANYKSCPLKKRPIVFVEE. Disordered stretches follow at residues 29–65 and 162–191; these read ALTKDSQFAQDQPQDLSLKRGRDEETQDYQQPEPKRD and QSVYSYQQMTPPSSPGSDLETGSEPEDLSV. Polar residues-rich tracts occupy residues 32 to 43 and 162 to 172; these read KDSQFAQDQPQD and QSVYSYQQMTP. C2H2-type zinc fingers lie at residues 245–267, 280–302, 306–328, 334–356, and 362–385; these read FKCDECQKMYSTSMGLSKHRQFH, HSCEECGKLYTTIGALKMHIRTH, CKCPICGKAFSRPWLLQGHIRTH, FQCPDCPRSFADRSNLRAHQQTH, and YACQVCHKSFSRMSLLNKHSSSNC.

The protein belongs to the snail C2H2-type zinc-finger protein family.

It is found in the nucleus. Functionally, essential for the correct specification of ventral-dorsal patterns. The sequence is that of Protein snail (sna) from Drosophila melanogaster (Fruit fly).